A 186-amino-acid chain; its full sequence is Type 1 phosphatases regulator ypi-1 (186 aa).

Residues 1 to 32 (MTSVAQRQAQPAQPSTSQTAAPTRTQTETSSP) show a composition bias toward polar residues. A disordered region spans residues 1 to 186 (MTSVAQRQAQ…SETQGPGGSK (186 aa)). The segment covering 82–94 (DSSSSSDSSSSSD) has biased composition (low complexity). The span at 122–137 (HDHDHDGREGGCNHDH) shows a compositional bias: basic and acidic residues. Positions 138–151 (GRGRKHGNKGKKTE) are enriched in basic residues.

The protein belongs to the YPI1 family.

It is found in the nucleus. In terms of biological role, regulator of type 1 phosphatases which maintains protein phosphatase activity under strict control. The protein is Type 1 phosphatases regulator ypi-1 (ypi-1) of Neurospora crassa (strain ATCC 24698 / 74-OR23-1A / CBS 708.71 / DSM 1257 / FGSC 987).